Consider the following 337-residue polypeptide: Tetraacyldisaccharide 4'-kinase (337 aa).

72-79 (TVGGSGKT) lines the ATP pocket.

It belongs to the LpxK family.

The enzyme catalyses a lipid A disaccharide + ATP = a lipid IVA + ADP + H(+). The protein operates within glycolipid biosynthesis; lipid IV(A) biosynthesis; lipid IV(A) from (3R)-3-hydroxytetradecanoyl-[acyl-carrier-protein] and UDP-N-acetyl-alpha-D-glucosamine: step 6/6. Functionally, transfers the gamma-phosphate of ATP to the 4'-position of a tetraacyldisaccharide 1-phosphate intermediate (termed DS-1-P) to form tetraacyldisaccharide 1,4'-bis-phosphate (lipid IVA). This Shewanella sediminis (strain HAW-EB3) protein is Tetraacyldisaccharide 4'-kinase.